The sequence spans 308 residues: Protein translocase subunit SecF (308 aa).

Helical transmembrane passes span 28–48 (SIIL…NFGI), 140–160 (IEAG…YIWV), 164–184 (WYFG…ALGF), 194–214 (LSTI…SVVI), 246–266 (ILTV…GGEA), and 272–292 (ILVF…SAPI).

This sequence belongs to the SecD/SecF family. SecF subfamily. Forms a complex with SecD. Part of the essential Sec protein translocation apparatus which comprises SecA, SecYEG and auxiliary proteins SecDF-YajC and YidC.

The protein localises to the cell inner membrane. In terms of biological role, part of the Sec protein translocase complex. Interacts with the SecYEG preprotein conducting channel. SecDF uses the proton motive force (PMF) to complete protein translocation after the ATP-dependent function of SecA. The chain is Protein translocase subunit SecF from Rickettsia rickettsii (strain Sheila Smith).